Reading from the N-terminus, the 576-residue chain is 5'-nucleotidase (576 aa).

Positions 1-28 (MRPAAAKVPKWLLLALSALLPQWPAASA) are cleaved as a signal peptide. The Zn(2+) site is built by aspartate 38 and histidine 40. Cysteines 53 and 59 form a disulfide. An N-linked (GlcNAc...) asparagine glycan is attached at asparagine 55. 4 residues coordinate Zn(2+): aspartate 87, asparagine 119, histidine 222, and histidine 245. Asparagine 313 and asparagine 335 each carry an N-linked (GlcNAc...) asparagine glycan. 2 disulfide bridges follow: cysteine 355/cysteine 360 and cysteine 367/cysteine 389. Arginine 356 contacts AMP. Residue arginine 356 participates in IMP binding. Residues asparagine 392 and arginine 397 each contribute to the AMP site. Asparagine 392 and arginine 397 together coordinate IMP. A glycan (N-linked (GlcNAc...) asparagine) is linked at asparagine 405. Position 419 (phenylalanine 419) interacts with AMP. Phenylalanine 419 contributes to the IMP binding site. Cysteine 478 and cysteine 481 are joined by a disulfide. Residues tyrosine 502 and aspartate 508 each contribute to the AMP site. IMP is bound by residues tyrosine 502 and aspartate 508. Serine 551 is lipidated: GPI-anchor amidated serine. A propeptide spans 552–576 (AASHYQGSFPLVILSFWAMILILYQ) (removed in mature form).

The protein belongs to the 5'-nucleotidase family. In terms of assembly, homodimer. It depends on Zn(2+) as a cofactor. In terms of tissue distribution, expressed at high levels in the placenta, kidney, lung and stomach and at lower levels in the thymus, spleen, skeletal muscle and esophagus.

It localises to the cell membrane. It catalyses the reaction a ribonucleoside 5'-phosphate + H2O = a ribonucleoside + phosphate. The catalysed reaction is a 2'-deoxyribonucleoside 5'-phosphate + H2O = a 2'-deoxyribonucleoside + phosphate. The enzyme catalyses dTMP + H2O = thymidine + phosphate. It carries out the reaction CMP + H2O = cytidine + phosphate. It catalyses the reaction IMP + H2O = inosine + phosphate. The catalysed reaction is AMP + H2O = adenosine + phosphate. The enzyme catalyses GMP + H2O = guanosine + phosphate. It carries out the reaction UMP + H2O = uridine + phosphate. It catalyses the reaction dAMP + H2O = 2'-deoxyadenosine + phosphate. The catalysed reaction is dCMP + H2O = 2'-deoxycytidine + phosphate. Functionally, catalyzes the hydrolysis of nucleotide monophosphates, releasing inorganic phosphate and the corresponding nucleoside. Hydrolyzes IMP. Shows a preference for ribonucleotide monophosphates over their equivalent deoxyribose forms. Although AMP is the preferred substrate can also hydrolyze UMP, GMP, CMP, dAMP, dCMP, dTMP, NAD and NMN. The chain is 5'-nucleotidase (Nt5e) from Mus musculus (Mouse).